The primary structure comprises 257 residues: Acetylglutamate kinase (257 aa).

Residues 41-42 (GG), Arg63, and Asn158 each bind substrate.

It belongs to the acetylglutamate kinase family. ArgB subfamily.

It localises to the cytoplasm. The catalysed reaction is N-acetyl-L-glutamate + ATP = N-acetyl-L-glutamyl 5-phosphate + ADP. The protein operates within amino-acid biosynthesis; L-arginine biosynthesis; N(2)-acetyl-L-ornithine from L-glutamate: step 2/4. Catalyzes the ATP-dependent phosphorylation of N-acetyl-L-glutamate. The chain is Acetylglutamate kinase from Bacteroides thetaiotaomicron (strain ATCC 29148 / DSM 2079 / JCM 5827 / CCUG 10774 / NCTC 10582 / VPI-5482 / E50).